The following is a 473-amino-acid chain: 3-isopropylmalate dehydratase large subunit (473 aa).

[4Fe-4S] cluster-binding residues include cysteine 348, cysteine 408, and cysteine 411.

The protein belongs to the aconitase/IPM isomerase family. LeuC type 1 subfamily. In terms of assembly, heterodimer of LeuC and LeuD. [4Fe-4S] cluster is required as a cofactor.

The enzyme catalyses (2R,3S)-3-isopropylmalate = (2S)-2-isopropylmalate. The protein operates within amino-acid biosynthesis; L-leucine biosynthesis; L-leucine from 3-methyl-2-oxobutanoate: step 2/4. Its function is as follows. Catalyzes the isomerization between 2-isopropylmalate and 3-isopropylmalate, via the formation of 2-isopropylmaleate. This chain is 3-isopropylmalate dehydratase large subunit, found in Haloarcula marismortui (strain ATCC 43049 / DSM 3752 / JCM 8966 / VKM B-1809) (Halobacterium marismortui).